A 26-amino-acid chain; its full sequence is M-poneritoxin-Ng1d (26 aa).

Expressed by the venom gland.

The protein localises to the secreted. It is found in the target cell membrane. In terms of biological role, has a broad spectrum of activity against both Gram-positive and Gram-negative bacteria and S.cerevisiae. Has insecticidal and hemolytic activities. May act by disrupting the integrity of the bacterial cell membrane. This Neoponera goeldii (Ponerine ant) protein is M-poneritoxin-Ng1d.